Here is a 433-residue protein sequence, read N- to C-terminus: 23S rRNA (uracil(1939)-C(5))-methyltransferase RlmD (433 aa).

The region spanning 10–68 (RTTTRQIITVSVNDLDSFGQGVARHNGKTLFIPGLLPQENAEVTVTEDKKQYARAKVVR) is the TRAM domain. C81, C87, C90, and C162 together coordinate [4Fe-4S] cluster. Residues Q265, F294, N299, E315, N342, and D363 each coordinate S-adenosyl-L-methionine. Residue C389 is the Nucleophile of the active site.

The protein belongs to the class I-like SAM-binding methyltransferase superfamily. RNA M5U methyltransferase family. RlmD subfamily.

It catalyses the reaction uridine(1939) in 23S rRNA + S-adenosyl-L-methionine = 5-methyluridine(1939) in 23S rRNA + S-adenosyl-L-homocysteine + H(+). In terms of biological role, catalyzes the formation of 5-methyl-uridine at position 1939 (m5U1939) in 23S rRNA. This Escherichia coli O157:H7 protein is 23S rRNA (uracil(1939)-C(5))-methyltransferase RlmD.